A 49-amino-acid chain; its full sequence is Putative metallothionein MT1DP (49 aa).

Residues 1 to 29 (MDLSCSCATGGSCTCASSCKCKEYKCTSC) are beta. Cys-5, Cys-7, Cys-13, Cys-15, Cys-19, Cys-21, Cys-26, Cys-29, Cys-33, Cys-34, Cys-36, Cys-37, Cys-41, Cys-44, and Cys-48 together coordinate a divalent metal cation. Positions 30–49 (KKNCCSCCPMGCAKCAQGCT) are alpha.

This sequence belongs to the metallothionein superfamily. Type 1 family.

Functionally, metallothioneins have a high content of cysteine residues that bind various heavy metals. This is Putative metallothionein MT1DP (MT1DP) from Homo sapiens (Human).